Consider the following 333-residue polypeptide: Type II restriction enzyme XcyI (333 aa).

Belongs to the XcyI type II restriction endonuclease family. In terms of assembly, monomer. Requires Mg(2+) as cofactor.

The enzyme catalyses Endonucleolytic cleavage of DNA to give specific double-stranded fragments with terminal 5'-phosphates.. Its function is as follows. A P subtype restriction enzyme that recognizes the double-stranded sequence 5'-CCCGGG-3' and cleaves after C-1. This chain is Type II restriction enzyme XcyI (xcyIR), found in Xanthomonas campestris pv. cyanopsidis.